The primary structure comprises 207 residues: Protein GET1 (207 aa).

Over 1–4 (MPSL) the chain is Lumenal. A helical transmembrane segment spans residues 5–24 (LISVLFLHIAIYIINTIGAS). Topologically, residues 25 to 110 (TIDSLLWLIY…LFDVAVKALR (86 aa)) are cytoplasmic. Positions 44–97 (MAREQHQMKLEVVQLKREMNATSSQDEFAKWAKLRRRHDKALEEYEVKNKQFSR) form a coiled coil. Residues 111–131 (WAGTSGLILLLQFWFSKTPIF) traverse the membrane as a helical segment. The Lumenal segment spans residues 132-155 (TLPPSWIPWQVEWVLSFPRAPMGT). The chain crosses the membrane as a helical span at residues 156–172 (VSIQVWGGACAVMVALV). Over 173–207 (GEAIGATVRYLYGSKDSMEAIKVGAGAVEKEKKRQ) the chain is Cytoplasmic.

It belongs to the WRB/GET1 family. As to quaternary structure, interacts with GET3.

It is found in the endoplasmic reticulum membrane. Functionally, required for the post-translational delivery of tail-anchored (TA) proteins to the endoplasmic reticulum. Acts as a membrane receptor for soluble GET3, which recognizes and selectively binds the transmembrane domain of TA proteins in the cytosol. The protein is Protein GET1 of Paracoccidioides lutzii (strain ATCC MYA-826 / Pb01) (Paracoccidioides brasiliensis).